Consider the following 151-residue polypeptide: Large ribosomal subunit protein uL13 (151 aa).

Positions 129–151 (PTHPHDAQKPKELNINTIPGAES) are disordered. Residues 131–140 (HPHDAQKPKE) show a composition bias toward basic and acidic residues.

This sequence belongs to the universal ribosomal protein uL13 family. In terms of assembly, part of the 50S ribosomal subunit.

Functionally, this protein is one of the early assembly proteins of the 50S ribosomal subunit, although it is not seen to bind rRNA by itself. It is important during the early stages of 50S assembly. This chain is Large ribosomal subunit protein uL13, found in Trichormus variabilis (strain ATCC 29413 / PCC 7937) (Anabaena variabilis).